The chain runs to 303 residues: Ornithine carbamoyltransferase (303 aa).

Carbamoyl phosphate is bound by residues S52–T55, Q79, R103, and H130–Q133. L-ornithine is bound by residues N161, D222, and S226–M227. Carbamoyl phosphate-binding positions include C262–L263 and R290.

The protein belongs to the aspartate/ornithine carbamoyltransferase superfamily. OTCase family.

The protein resides in the cytoplasm. It carries out the reaction carbamoyl phosphate + L-ornithine = L-citrulline + phosphate + H(+). The protein operates within amino-acid biosynthesis; L-arginine biosynthesis; L-arginine from L-ornithine and carbamoyl phosphate: step 1/3. Functionally, reversibly catalyzes the transfer of the carbamoyl group from carbamoyl phosphate (CP) to the N(epsilon) atom of ornithine (ORN) to produce L-citrulline. This is Ornithine carbamoyltransferase from Geobacter sulfurreducens (strain ATCC 51573 / DSM 12127 / PCA).